The primary structure comprises 1463 residues: DNA polymerase III PolC-type (1463 aa).

Positions 425 to 581 (YVVFDVETTG…YDAEATGRLL (157 aa)) constitute an Exonuclease domain.

It belongs to the DNA polymerase type-C family. PolC subfamily.

It is found in the cytoplasm. It carries out the reaction DNA(n) + a 2'-deoxyribonucleoside 5'-triphosphate = DNA(n+1) + diphosphate. Required for replicative DNA synthesis. This DNA polymerase also exhibits 3' to 5' exonuclease activity. The chain is DNA polymerase III PolC-type from Streptococcus suis (strain 98HAH33).